The primary structure comprises 190 residues: FUN14 domain-containing protein 2 (190 aa).

A compositionally biased stretch (polar residues) spans 1-13 (METSTQRTGSHLA). Residues 1-31 (METSTQRTGSHLAQTAAARHSASSRGEAARV) form a disordered region. The Cytoplasmic segment spans residues 1–81 (METSTQRTGS…GQESGPSAEK (81 aa)). Phosphoserine occurs at positions 10 and 54. The chain crosses the membrane as a helical span at residues 82–102 (YSVATQLLIGGVTGWCTGFIF). Residues 103-108 (QKVGKL) lie on the Mitochondrial intermembrane side of the membrane. Residues 109 to 129 (AATAVGGGFFLLQLANHTGYI) form a helical membrane-spanning segment. The Cytoplasmic portion of the chain corresponds to 130 to 165 (KVDWQRVEKDMKKAKEQLKIRKSNQIPTEVKSKAEE). S152 bears the Phosphoserine mark. Residues 166–186 (VVSFVKKNVLVTGGFFGGFLL) form a helical membrane-spanning segment. Topologically, residues 187–190 (GMAS) are mitochondrial intermembrane.

The protein belongs to the FUN14 family.

The protein localises to the mitochondrion outer membrane. Its subcellular location is the nucleus. Its function is as follows. Binds directly and specifically 1,2-Diacyl-sn-glycero-3-phospho-(1'-myo-inositol-3',4',5'-bisphosphate) (PIP3) leading to the recruitment of PIP3 to mitochondria and may play a role in the regulation of the platelet activation via AKT/GSK3B/cGMP signaling pathways. May act as transcription factor that regulates SREBP1 (isoform SREBP-1C) expression in order to modulate triglyceride (TG) homeostasis in hepatocytes. The polypeptide is FUN14 domain-containing protein 2 (Bos taurus (Bovine)).